The sequence spans 104 residues: Pyrimidine/purine nucleoside phosphorylase (104 aa).

It belongs to the nucleoside phosphorylase PpnP family.

It carries out the reaction a purine D-ribonucleoside + phosphate = a purine nucleobase + alpha-D-ribose 1-phosphate. The enzyme catalyses adenosine + phosphate = alpha-D-ribose 1-phosphate + adenine. The catalysed reaction is cytidine + phosphate = cytosine + alpha-D-ribose 1-phosphate. It catalyses the reaction guanosine + phosphate = alpha-D-ribose 1-phosphate + guanine. It carries out the reaction inosine + phosphate = alpha-D-ribose 1-phosphate + hypoxanthine. The enzyme catalyses thymidine + phosphate = 2-deoxy-alpha-D-ribose 1-phosphate + thymine. The catalysed reaction is uridine + phosphate = alpha-D-ribose 1-phosphate + uracil. It catalyses the reaction xanthosine + phosphate = alpha-D-ribose 1-phosphate + xanthine. Catalyzes the phosphorolysis of diverse nucleosides, yielding D-ribose 1-phosphate and the respective free bases. Can use uridine, adenosine, guanosine, cytidine, thymidine, inosine and xanthosine as substrates. Also catalyzes the reverse reactions. This is Pyrimidine/purine nucleoside phosphorylase from Geobacter sulfurreducens (strain ATCC 51573 / DSM 12127 / PCA).